The primary structure comprises 72 residues: Translation initiation factor IF-1 (72 aa).

The region spanning 1–72 (MAKDDVIEVE…TRGRITYRYK (72 aa)) is the S1-like domain. At Tyr60 the chain carries Phosphotyrosine.

The protein belongs to the IF-1 family. In terms of assembly, component of the 30S ribosomal translation pre-initiation complex which assembles on the 30S ribosome in the order IF-2 and IF-3, IF-1 and N-formylmethionyl-tRNA(fMet); mRNA recruitment can occur at any time during PIC assembly.

It is found in the cytoplasm. One of the essential components for the initiation of protein synthesis. Stabilizes the binding of IF-2 and IF-3 on the 30S subunit to which N-formylmethionyl-tRNA(fMet) subsequently binds. Helps modulate mRNA selection, yielding the 30S pre-initiation complex (PIC). Upon addition of the 50S ribosomal subunit IF-1, IF-2 and IF-3 are released leaving the mature 70S translation initiation complex. The polypeptide is Translation initiation factor IF-1 (Bacillus pumilus (strain SAFR-032)).